The following is a 447-amino-acid chain: Argininosuccinate synthase (447 aa).

ATP is bound by residues 17-25 (AFSGGLDTS) and alanine 43. Tyrosine 99 contributes to the L-citrulline binding site. Residues glycine 129 and threonine 131 each contribute to the ATP site. Residues threonine 131, asparagine 135, and aspartate 136 each contribute to the L-aspartate site. Asparagine 135 serves as a coordination point for L-citrulline. Position 136 (aspartate 136) interacts with ATP. L-citrulline contacts are provided by arginine 139 and serine 192. ATP is bound at residue aspartate 194. 3 residues coordinate L-citrulline: threonine 201, glutamate 203, and glutamate 280.

This sequence belongs to the argininosuccinate synthase family. Type 2 subfamily. As to quaternary structure, homotetramer.

It localises to the cytoplasm. The catalysed reaction is L-citrulline + L-aspartate + ATP = 2-(N(omega)-L-arginino)succinate + AMP + diphosphate + H(+). It participates in amino-acid biosynthesis; L-arginine biosynthesis; L-arginine from L-ornithine and carbamoyl phosphate: step 2/3. The chain is Argininosuccinate synthase from Shigella boydii serotype 18 (strain CDC 3083-94 / BS512).